We begin with the raw amino-acid sequence, 204 residues long: Glycerol-3-phosphate acyltransferase (204 aa).

5 consecutive transmembrane segments (helical) span residues 8–28 (ILIF…CYIF), 53–73 (VPAA…VVIA), 81–101 (FITA…IFFG), 116–136 (FGFS…VAII), and 155–175 (VIFT…IIIL).

It belongs to the PlsY family. Probably interacts with PlsX.

It localises to the cell inner membrane. It carries out the reaction an acyl phosphate + sn-glycerol 3-phosphate = a 1-acyl-sn-glycero-3-phosphate + phosphate. Its pathway is lipid metabolism; phospholipid metabolism. Its function is as follows. Catalyzes the transfer of an acyl group from acyl-phosphate (acyl-PO(4)) to glycerol-3-phosphate (G3P) to form lysophosphatidic acid (LPA). This enzyme utilizes acyl-phosphate as fatty acyl donor, but not acyl-CoA or acyl-ACP. This is Glycerol-3-phosphate acyltransferase from Francisella tularensis subsp. tularensis (strain FSC 198).